We begin with the raw amino-acid sequence, 200 residues long: NAD(P)H-dependent FMN reductase C4B3.06c (200 aa).

FMN is bound by residues Arg-22, 96-99, and Tyr-126; that span reads QYNG.

In terms of assembly, homodimer.

It localises to the cytoplasm. Its subcellular location is the nucleus. The enzyme catalyses FMNH2 + NADP(+) = FMN + NADPH + 2 H(+). It carries out the reaction FMNH2 + NAD(+) = FMN + NADH + 2 H(+). Functionally, has several reductase activities that are NAD(P)H-dependent and involve FMN as a cofactor. May be involved in ferric iron assimilation. This chain is NAD(P)H-dependent FMN reductase C4B3.06c, found in Schizosaccharomyces pombe (strain 972 / ATCC 24843) (Fission yeast).